A 415-amino-acid polypeptide reads, in one-letter code: Histidine--tRNA ligase (415 aa).

It belongs to the class-II aminoacyl-tRNA synthetase family. As to quaternary structure, homodimer.

It is found in the cytoplasm. It catalyses the reaction tRNA(His) + L-histidine + ATP = L-histidyl-tRNA(His) + AMP + diphosphate + H(+). The protein is Histidine--tRNA ligase of Clostridium perfringens (strain ATCC 13124 / DSM 756 / JCM 1290 / NCIMB 6125 / NCTC 8237 / Type A).